The primary structure comprises 410 residues: UPF0761 membrane protein Csal_1895 (410 aa).

The next 6 helical transmembrane spans lie at 43-63 (LFAVVPFMTVLYAMLSAIPSF), 99-119 (SLTLIGLMFLLVTAVMMMVTV), 139-159 (FLLYWAVLTLGPLLLGSGFLL), 180-200 (VAFLRLLPLTLSFTAFVFIYM), 212-232 (AVAGAGLAALALELAKGAFSL), and 247-267 (FAAVPLFLVWVFLSWAIVLVG).

This sequence belongs to the UPF0761 family.

The protein resides in the cell inner membrane. The protein is UPF0761 membrane protein Csal_1895 of Chromohalobacter salexigens (strain ATCC BAA-138 / DSM 3043 / CIP 106854 / NCIMB 13768 / 1H11).